A 511-amino-acid chain; its full sequence is Glucans biosynthesis protein G (511 aa).

An N-terminal signal peptide occupies residues 1 to 22 (MMKMRWLSAAVMLTLYTSSSWA).

The protein belongs to the OpgD/OpgG family.

It localises to the periplasm. The protein operates within glycan metabolism; osmoregulated periplasmic glucan (OPG) biosynthesis. Its function is as follows. Involved in the biosynthesis of osmoregulated periplasmic glucans (OPGs). This Shigella dysenteriae serotype 1 (strain Sd197) protein is Glucans biosynthesis protein G.